A 97-amino-acid polypeptide reads, in one-letter code: Large ribosomal subunit protein uL23 (97 aa).

It belongs to the universal ribosomal protein uL23 family. In terms of assembly, part of the 50S ribosomal subunit. Contacts protein L29, and trigger factor when it is bound to the ribosome.

Its function is as follows. One of the early assembly proteins it binds 23S rRNA. One of the proteins that surrounds the polypeptide exit tunnel on the outside of the ribosome. Forms the main docking site for trigger factor binding to the ribosome. This chain is Large ribosomal subunit protein uL23, found in Sulfurihydrogenibium sp. (strain YO3AOP1).